The sequence spans 1295 residues: Unconventional myosin-VI (1295 aa).

The Myosin N-terminal SH3-like domain maps to 2 to 53; the sequence is EDGRPVWAPHPTEGFQMGNIVDIGPDSLTIEPLGQKGKTFLALINQVFPAEE. The 715-residue stretch at 57–771 folds into the Myosin motor domain; sequence KDVEDNCSLM…KFAEFDQIMK (715 aa). Residue 151–158 coordinates ATP; sequence GESGAGKT. Position 267 is a phosphoserine (Ser-267). The interval 273–317 is responsible for slow ATPase activity; that stretch reads YLNRGCTRYFANKETDKQILQNRKTPEHLKAGSLKDPLLDDHGDF. Position 405 is a phosphothreonine (Thr-405). Ser-604 carries the post-translational modification Phosphoserine. An actin-binding region spans residues 651 to 673; that stretch reads LNLLLDKLRSTGASFIRCIKPNL. The required for binding calmodulin stretch occupies residues 782–810; the sequence is KRVNHWLICSRWKKVQWCSLSVIKLKNKI. The IQ domain occupies 813-842; that stretch reads RAEACIKMQKTIRMWLCKRRHKPRIDGLVK. The interval 835-916 is three-helix bundle; that stretch reads PRIDGLVKVG…EVLLSALQKK (82 aa). Residues 917 to 984 are SAH; sequence KQQEEEAERL…EDDEKRIQAE (68 aa). Residues 934 to 955 are disordered; it reads EKERKRREEDEQRRRKEEEERR. The segment at 1061 to 1286 is interaction with TAX1BP1 and CALCOCO2/NDP52; that stretch reads KEMSEILSRG…ESRQARPTYA (226 aa). Residues 1117–1119 are interaction with OPTN; the sequence is RRL. At Ser-1156 the chain carries Phosphoserine. The segment at 1158 to 1286 is interaction with TOM1; that stretch reads QQNPAAQLPA…ESRQARPTYA (129 aa).

The protein belongs to the TRAFAC class myosin-kinesin ATPase superfamily. Myosin family. Homodimer; dimerization seems to implicate the unfolding of the three-helix bundle region creating an additional calmodulin binding site, and cargo binding. Able to function as a monomer under specific conditions in vitro. Forms a complex with CFTR and DAB2 in the apical membrane of epithelial cells. Component of the DISP/DOCK7-induced septin displacement complex, at least composed of DOCK7, LRCH3 and MYO6. Binding to calmodulin through a unique insert, not found in other myosins, located in the neck region between the motor domain and the IQ domain appears to contribute to the directionality reversal. This interaction occurs only if the C-terminal lobe of calmodulin is occupied by calcium. Interaction with F-actin/ACTN1 occurs only at the apical brush border domain of the proximal tubule cells. Interacts with DAB2. In vitro, the C-terminal globular tail binds a C-terminal region of DAB2. Interacts with CFTR. Interacts with CABP5. Interacts (via residues 1158-1286) with TOM1 (via residues 392-463). Interacts (via residues 1060-1285) with OPTN. Interacts (via residues 1060-1285) with TAX1BP1 and CALCOCO2/NDP52. Interacts with TOM1L2. Interacts with CLIC5; may work together in a complex which also includes RDX and MYO6 to stabilize linkages between the plasma membrane and subjacent actin cytoskeleton at the base of stereocilia. In terms of processing, phosphorylation in the motor domain, induced by EGF, results in translocation of MYO6 from the cell surface to membrane ruffles and affects F-actin dynamics. Phosphorylated in vitro by p21-activated kinase (PAK). Expressed in the retina (at protein level).

Its subcellular location is the golgi apparatus. It is found in the trans-Golgi network membrane. The protein resides in the nucleus. It localises to the cytoplasm. The protein localises to the perinuclear region. Its subcellular location is the membrane. It is found in the clathrin-coated pit. The protein resides in the cytoplasmic vesicle. It localises to the clathrin-coated vesicle. The protein localises to the cell projection. Its subcellular location is the filopodium. It is found in the ruffle membrane. The protein resides in the microvillus. It localises to the cytosol. Its function is as follows. Myosins are actin-based motor molecules with ATPase activity. Unconventional myosins serve in intracellular movements. Myosin 6 is a reverse-direction motor protein that moves towards the minus-end of actin filaments. Has slow rate of actin-activated ADP release due to weak ATP binding. Functions in a variety of intracellular processes such as vesicular membrane trafficking and cell migration. Required for the structural integrity of the Golgi apparatus via the p53-dependent pro-survival pathway. Appears to be involved in a very early step of clathrin-mediated endocytosis in polarized epithelial cells. Together with TOM1, mediates delivery of endocytic cargo to autophagosomes thereby promoting autophagosome maturation and driving fusion with lysosomes. Links TOM1 with autophagy receptors, such as TAX1BP1; CALCOCO2/NDP52 and OPTN. May act as a regulator of F-actin dynamics. As part of the DISP complex, may regulate the association of septins with actin and thereby regulate the actin cytoskeleton. May play a role in transporting DAB2 from the plasma membrane to specific cellular targets. May play a role in the extension and network organization of neurites. Required for structural integrity of inner ear hair cells. Required for the correct localization of CLIC5 and RDX at the stereocilium base. Modulates RNA polymerase II-dependent transcription. The sequence is that of Unconventional myosin-VI from Bos taurus (Bovine).